The chain runs to 648 residues: MIDIILPDGSVKQYKIGVTGQEIIQSLSISLFKKTIAVEINNELIDLYIPIINTATVKAITIDSVQGIEILRHDTAHILAQAVKKLFPDTQVVIGPVIKDGFYYDFARDKPFTNKDLEVIEQEMQDIIAKNDLIQREVWLRAKAIEFFKQQKEFYKVKLIEEIPESEEISIYRQGNFVDLCRGPHSPSTGYCTKYFKLTKVSGAYWRGNSKNEVLQRIYGTAWEKKSDLDSYLHRLSEAQKRDHRKLGRELELFHFQDEAQGMPFWHDKGWTIFKIIKNYISCQIQRAGYIEVNTPMVLSQKLWEKSGHWEKFRENMFTLDTNVAEKDHNLIKDSIETKCALALKPMNCPGHIQIFNYTIKSYRDLPLRMAEFGSCHRYEPSGALYGLMRVRSFVQDDAHIFCTEDQITDETIKFCHLLKQVYQDFGFPEVKIKFSDRPEKRAGTDKIWDKAEQALIHAIQTLGEEYTINRGEGAFYGPKLEFILTDAIGREWQCGTLQVDFVLPERLNASYISSEGSKKRPVILHRAILGSFERFIGILIEHYSGRLPIWLAPIQVAVVSITDEAVNYAKQLHQELIDNNIRSTLDISNQKINYKIRNFFTAKVPLIAILGKKESESGKIAIRTLGSQEQQVISSSELIAHIRKNKK.

In terms of domain architecture, TGS spans 1–61 (MIDIILPDGS…INTATVKAIT (61 aa)). Positions 243–549 (DHRKLGRELE…LIEHYSGRLP (307 aa)) are catalytic. Zn(2+) contacts are provided by Cys349, His400, and His526.

It belongs to the class-II aminoacyl-tRNA synthetase family. Homodimer. Zn(2+) is required as a cofactor.

The protein resides in the cytoplasm. It carries out the reaction tRNA(Thr) + L-threonine + ATP = L-threonyl-tRNA(Thr) + AMP + diphosphate + H(+). Functionally, catalyzes the attachment of threonine to tRNA(Thr) in a two-step reaction: L-threonine is first activated by ATP to form Thr-AMP and then transferred to the acceptor end of tRNA(Thr). Also edits incorrectly charged L-seryl-tRNA(Thr). In Orientia tsutsugamushi (strain Boryong) (Rickettsia tsutsugamushi), this protein is Threonine--tRNA ligase.